We begin with the raw amino-acid sequence, 363 residues long: Ly6/PLAUR domain-containing protein 3 (363 aa).

An N-terminal signal peptide occupies residues 1–32 (MDAARRGDTQPVMWTTGWLLLLPLLLCEGAQA). One can recognise a UPAR/Ly6 1 domain in the interval 35 to 128 (CYSCVQKADD…LNLTLRGLNP (94 aa)). Asn120, Asn131, Asn178, and Asn185 each carry an N-linked (GlcNAc...) asparagine glycan. One can recognise a UPAR/Ly6 2 domain in the interval 142–224 (CYSCVGLSRE…GSCCQGPRCN (83 aa)). The span at 238–248 (PPLVLLPPPTT) shows a compositional bias: pro residues. Disordered regions lie at residues 238–287 (PPLV…TSPH) and 301–336 (LSGG…GGAQ). Residues 249–278 (AAPSTRAQNSSSTTSTAAPTTTTSIIKPTT) are compositionally biased toward low complexity. A compositionally biased stretch (gly residues) spans 304 to 318 (GAAGHGGTAGHGGAA). Residues 320–330 (HQDRSNMEKYP) are compositionally biased toward basic and acidic residues. Ser343 is lipidated: GPI-anchor amidated serine. Residues 344–363 (GTLGSWLSAVLLTVVAGAML) constitute a propeptide, removed in mature form.

As to quaternary structure, binds laminin-1 and laminin-5. Interacts with LGALS3. Interacts with AGR2 and AGR3.

It localises to the cell membrane. In terms of biological role, supports cell migration. May be involved in tumor progression. The protein is Ly6/PLAUR domain-containing protein 3 (Lypd3) of Mus musculus (Mouse).